Here is a 438-residue protein sequence, read N- to C-terminus: Glutamyl-tRNA(Gln) amidotransferase subunit D (438 aa).

An Asparaginase/glutaminase domain is found at 92 to 422 (PTITILGTGG…REAKKMMLTN (331 aa)). Active-site residues include T102, T178, D179, and K256.

This sequence belongs to the asparaginase 1 family. GatD subfamily. As to quaternary structure, heterodimer of GatD and GatE.

It carries out the reaction L-glutamyl-tRNA(Gln) + L-glutamine + ATP + H2O = L-glutaminyl-tRNA(Gln) + L-glutamate + ADP + phosphate + H(+). Its function is as follows. Allows the formation of correctly charged Gln-tRNA(Gln) through the transamidation of misacylated Glu-tRNA(Gln) in organisms which lack glutaminyl-tRNA synthetase. The reaction takes place in the presence of glutamine and ATP through an activated gamma-phospho-Glu-tRNA(Gln). The GatDE system is specific for glutamate and does not act on aspartate. The chain is Glutamyl-tRNA(Gln) amidotransferase subunit D from Pyrococcus furiosus (strain ATCC 43587 / DSM 3638 / JCM 8422 / Vc1).